A 454-amino-acid polypeptide reads, in one-letter code: 3-phosphoshikimate 1-carboxyvinyltransferase (454 aa).

3-phosphoshikimate-binding residues include Lys39, Ser40, and Arg44. Lys39 lines the phosphoenolpyruvate pocket. Positions 112 and 140 each coordinate phosphoenolpyruvate. 3-phosphoshikimate-binding residues include Ser185, Gln187, Asp333, and Lys360. Gln187 serves as a coordination point for phosphoenolpyruvate. Catalysis depends on Asp333, which acts as the Proton acceptor. Phosphoenolpyruvate-binding residues include Arg364 and Arg405.

The protein belongs to the EPSP synthase family. Monomer.

The protein localises to the cytoplasm. It catalyses the reaction 3-phosphoshikimate + phosphoenolpyruvate = 5-O-(1-carboxyvinyl)-3-phosphoshikimate + phosphate. The protein operates within metabolic intermediate biosynthesis; chorismate biosynthesis; chorismate from D-erythrose 4-phosphate and phosphoenolpyruvate: step 6/7. In terms of biological role, catalyzes the transfer of the enolpyruvyl moiety of phosphoenolpyruvate (PEP) to the 5-hydroxyl of shikimate-3-phosphate (S3P) to produce enolpyruvyl shikimate-3-phosphate and inorganic phosphate. The sequence is that of 3-phosphoshikimate 1-carboxyvinyltransferase from Xylella fastidiosa (strain Temecula1 / ATCC 700964).